A 438-amino-acid polypeptide reads, in one-letter code: Coenzyme A disulfide reductase (438 aa).

FAD is bound at residue 8–33 (GAVAGGATCASQIRRLDKESDIIIFE). Substrate is bound by residues Thr-15, Gln-19, Arg-22, Ser-39, and Asn-42. The active-site Nucleophile is Cys-43. The active-site Redox-active is the Cys-43. Lys-71 provides a ligand contact to substrate. An NADP(+)-binding site is contributed by 151–166 (VLVVGAGYVSLEVLEN). 267–277 (TNVPNIYVIGD) is an FAD binding site. Substrate is bound at residue His-299. Tyr-419 contacts FAD. Lys-427 lines the substrate pocket.

This sequence belongs to the class-III pyridine nucleotide-disulfide oxidoreductase family. Homodimer. FAD serves as cofactor.

It catalyses the reaction NADP(+) + 2 CoA = CoA-disulfide + NADPH + H(+). Its function is as follows. Catalyzes specifically the NADPH-dependent reduction of coenzyme A disulfide. The chain is Coenzyme A disulfide reductase from Staphylococcus aureus (strain MRSA252).